The primary structure comprises 170 residues: Transmembrane protein 252 (170 aa).

The next 2 membrane-spanning stretches (helical) occupy residues 8–28 (ILCA…AFFI) and 40–60 (LIAA…GIFW). Residues 112–147 (CPAEREASGIPPPLYTETGLEFQDGNDSHPEAPPSY) form a disordered region.

The protein resides in the membrane. This is Transmembrane protein 252 (TMEM252) from Homo sapiens (Human).